The following is a 393-amino-acid chain: Protein TsgA (393 aa).

The next 12 helical transmembrane spans lie at 11-31, 51-71, 78-98, 101-121, 134-154, 162-182, 206-226, 245-265, 273-293, 297-317, 332-352, and 361-381; these read WISFLSYALTGALVIVTGMVM, FLNAGILISIFLNAWLMEIVP, FGFLLMVLAVAGLMFSHSLAL, AAMFILGVVSGITMSIGTFLI, LLFTDSFFSMAGMIFPMIAAF, WYWVYACIGLVYVAIFILTFG, IGVLFLSIAALCYILGQLGFI, TLVSNFWMSYMVGMWAFSFIL, ILTVLAGLAAILMYVFNTGTP, AWSILALGFFSSAIYTTIITL, FVLTCGTIGTMLTFVVTGPIV, and LLTANGLYAVVFVMCFLLGFV.

This sequence belongs to the major facilitator superfamily. TsgA family.

The protein resides in the cell inner membrane. The sequence is that of Protein TsgA from Escherichia coli O7:K1 (strain IAI39 / ExPEC).